Reading from the N-terminus, the 205-residue chain is Myb-related protein 305 (205 aa).

HTH myb-type domains are found at residues Asp10–Leu62 and Arg63–Met117. 2 consecutive DNA-binding regions (H-T-H motif) follow at residues Trp38–Leu62 and Trp90–Ile113.

Expressed only in flowers.

The protein resides in the nucleus. In terms of biological role, transcription factor. In Antirrhinum majus (Garden snapdragon), this protein is Myb-related protein 305.